The following is a 229-amino-acid chain: Sperm flagellar protein 1 (229 aa).

Residues 7-115 form the Calponin-homology (CH) domain; that stretch reads EETMQELYTW…TLRQKIEEKQ (109 aa). A disordered region spans residues 122–169; that stretch reads ADLSQDQATQNNGNTHSDKGYKSNGTELSPRQGARVDPASKTHQGYAQ. Positions 123 to 136 are enriched in polar residues; sequence DLSQDQATQNNGNT. Residues 178-229 are essential for homodimerization and microtubule bundling activity; sequence RFQLAEKEQTLILSQETIQILQAKLRRLEQLLLLKNVRIDDLTRRLQELEKK.

As to quaternary structure, homodimer.

It is found in the cytoplasm. Its subcellular location is the cytoskeleton. The protein resides in the cilium axoneme. The protein localises to the apical cell membrane. Its function is as follows. Microtubule-associated protein involved in the stabilization of microtubules along the axis of migration during radial intercalation. Promotes the establishment and stabilization of an axis of microtubules required for the active migration of cells into the outer epithelium. Microtubule-associated protein that promotes microtubule bundling and stabilizes microtubules against depolymerization in response to cold shock. Essential for ciliary central apparatus formation which requires both its microtubule-binding and bundling activities. Regulates planar cell polarity signaling pathway and asymmetric microtubule accumulation in ciliated epithelia. The sequence is that of Sperm flagellar protein 1 from Xenopus laevis (African clawed frog).